The primary structure comprises 1967 residues: RNA replication polyprotein (1967 aa).

The region spanning 63–252 (SPYAGFPHSH…YEQPLSGGYL (190 aa)) is the Alphavirus-like MT domain. The Fe2OG dioxygenase domain occupies 750-841 (TYDCMLAQRY…RVSYTFRRLA (92 aa)). Fe cation contacts are provided by His-768, Asp-770, and His-823. Arg-832 serves as a coordination point for 2-oxoglutarate. The OTU domain occupies 884–991 (FNVQCVPGDG…GSHFEPLEPK (108 aa)). Residues 990–1080 (PKEMCVVKAI…MTTDHLSYDG (91 aa)) enclose the Peptidase C23 domain. Active-site residues include Cys-994 and His-1075. Positions 1133–1308 (GSTGVMCSEL…DGIEYKFNIL (176 aa)) constitute a (+)RNA virus helicase ATP-binding domain. 1166–1173 (GTFGCGKS) serves as a coordination point for ATP. Residues 1309 to 1455 (SRRFQSSLFR…SARQEDLRRM (147 aa)) enclose the (+)RNA virus helicase C-terminal domain. One can recognise a RdRp catalytic domain in the interval 1748–1855 (GVCTESDYEA…NGRLHVSSKH (108 aa)).

This sequence belongs to the potexviruses/carlaviruses RNA replication protein family. Fe(2+) is required as a cofactor. Specific enzymatic cleavages by the viral protease yield mature proteins.

It catalyses the reaction ATP + H2O = ADP + phosphate + H(+). The catalysed reaction is RNA(n) + a ribonucleoside 5'-triphosphate = RNA(n+1) + diphosphate. RNA-directed RNA polymerase involved in viral RNA replication. Functionally, protease: Thiol protease that cleaves the polyprotein. The chain is RNA replication polyprotein from Vaccinium corymbosum (Highbush blueberry).